A 72-amino-acid polypeptide reads, in one-letter code: Brevinin-2GHb (72 aa).

A signal peptide spans 1-22; the sequence is MFTMKKSLLLLFFLGTVSLSLC. The propeptide occupies 23–42; that stretch reads EQERGADEDDGGEMTEELKR. An intrachain disulfide couples Cys-66 to Cys-72.

As to expression, expressed by the skin glands.

It localises to the secreted. Its function is as follows. Antimicrobial peptide. Active against the Gram-positive bacteria S.aureus FDA209P (MIC=16.5 ug/ml) and B.subtilis ATCC 6633 (MIC&gt;64 ug/ml), and the Gram-negative bacteria E.coli O111 (MIC=8.2 ug/ml) and E.coli ATCC 25922 (MIC=8.2 ug/ml). Not active against the fungus C.albicans. The sequence is that of Brevinin-2GHb from Sylvirana guentheri (Gunther's frog).